Reading from the N-terminus, the 175-residue chain is Sec-independent protein translocase protein TatB (175 aa).

The helical transmembrane segment at 1 to 21 threads the bilayer; it reads MLDLGLTKMALIGVVALVVLG. 2 disordered regions span residues 104-132 and 155-175; these read GGALEDVGNAGNTSWPGSTPAAGAKRKNW and SGAARVARHTPATMRRPTRFF.

The protein belongs to the TatB family. The Tat system comprises two distinct complexes: a TatABC complex, containing multiple copies of TatA, TatB and TatC subunits, and a separate TatA complex, containing only TatA subunits. Substrates initially bind to the TatABC complex, which probably triggers association of the separate TatA complex to form the active translocon.

The protein localises to the cell inner membrane. Functionally, part of the twin-arginine translocation (Tat) system that transports large folded proteins containing a characteristic twin-arginine motif in their signal peptide across membranes. Together with TatC, TatB is part of a receptor directly interacting with Tat signal peptides. TatB may form an oligomeric binding site that transiently accommodates folded Tat precursor proteins before their translocation. This Paraburkholderia xenovorans (strain LB400) protein is Sec-independent protein translocase protein TatB.